We begin with the raw amino-acid sequence, 865 residues long: Leucine--tRNA ligase (865 aa).

The short motif at 36-46 (PYPSGKIHMGH) is the 'HIGH' region element. Positions 608–612 (KMSKS) match the 'KMSKS' region motif. K611 provides a ligand contact to ATP.

This sequence belongs to the class-I aminoacyl-tRNA synthetase family.

Its subcellular location is the cytoplasm. It catalyses the reaction tRNA(Leu) + L-leucine + ATP = L-leucyl-tRNA(Leu) + AMP + diphosphate. This Wolbachia sp. subsp. Brugia malayi (strain TRS) protein is Leucine--tRNA ligase.